A 97-amino-acid polypeptide reads, in one-letter code: MQKSEGFRSKTRYKLQKHPRQKGMAPLTRALKCYTEGDRVHVVLDPSVQKGMPHPKFHGKTGVVVAQRGRSFLVRVKDGGKYKDIIARPQHLRESKL.

The disordered stretch occupies residues Met1 to Pro26. Positions Ser9 to Gln21 are enriched in basic residues.

It belongs to the eukaryotic ribosomal protein eL21 family.

This chain is Large ribosomal subunit protein eL21, found in Methanococcus maripaludis (strain C6 / ATCC BAA-1332).